The chain runs to 513 residues: Membrane-bound transcription factor site-2 protease homolog (513 aa).

The Cytoplasmic portion of the chain corresponds to 1 to 60 (MEISGRRMRRFRMRFRRDHLTGGENIENEASCCYCDLKISNFNEPIFRLGRRFSGVLKVW). A helical membrane pass occupies residues 61-81 (FSIGLGFGVASLILVTVFLLL). The Lumenal segment spans residues 82–107 (QFHSNPLFSNRLTSAVFGFSPSTRVS). The helical transmembrane segment at 108-128 (LSGIAYVLVSTVITVSVHELG) threads the bilayer. H125 lines the Zn(2+) pocket. E126 is an active-site residue. Residue H129 participates in Zn(2+) binding. Topologically, residues 129-137 (HALAAASEG) are cytoplasmic. The helical transmembrane segment at 138 to 158 (IQMEYIAVFIAAIFPGGLVAF) threads the bilayer. Residues 159-182 (DNDVLQSLPSFNALRIYCAGIWHN) are Lumenal-facing. A helical transmembrane segment spans residues 183-203 (AVFCALCVFALFLLPVMLSPF). Residues 204-437 (YKHGESLTVV…KSFPNILERS (234 aa)) lie on the Cytoplasmic side of the membrane. Residues 438–458 (LTCTFHVSLALVLLNSLPVYY) traverse the membrane as a helical segment. Residues 459–485 (LDGESILESSLQSFTWLSPRKKKKALQ) lie on the Lumenal side of the membrane. Residues 486–506 (VCLVGGSLLSFLAFFRIFLLG) traverse the membrane as a helical segment. Over 507–513 (LPLSRRW) the chain is Cytoplasmic.

It belongs to the peptidase M50A family. Requires Zn(2+) as cofactor. As to expression, expressed in the vasculature of roots, cotyledons and leaves.

The protein localises to the golgi apparatus membrane. Metalloprotease that catalyzes the second step (site-2 cleavage) in the proteolytic activation of various factors, after site-1 cleavage. Part of a regulated intramembrane proteolysis (RIP) cascade. After ER stress, cleaves BZIP17 and BZIP28 proteins which function as stress sensors and transducers in ER stress signaling pathway. The N-terminal bZIP component is translocated to the nucleus, where it activates the expression and production of ER chaperones, as well as proteins involved in brassinosteroid (BR) signaling, which is required for stress acclimation and growth. This chain is Membrane-bound transcription factor site-2 protease homolog (S2P), found in Arabidopsis thaliana (Mouse-ear cress).